The following is a 469-amino-acid chain: Ribulose bisphosphate carboxylase large chain (469 aa).

A propeptide spanning residues 1-2 (MS) is cleaved from the precursor. N-acetylproline is present on Pro3. Lys14 bears the N6,N6,N6-trimethyllysine mark. Asn123 and Thr173 together coordinate substrate. Catalysis depends on Lys175, which acts as the Proton acceptor. Lys177 is a binding site for substrate. The Mg(2+) site is built by Lys201, Asp203, and Glu204. Lys201 is modified (N6-carboxylysine). Residue His294 is the Proton acceptor of the active site. Substrate is bound by residues Arg295, His327, and Ser379.

It belongs to the RuBisCO large chain family. Type I subfamily. In terms of assembly, heterohexadecamer of 8 large chains and 8 small chains; disulfide-linked. The disulfide link is formed within the large subunit homodimers. Mg(2+) serves as cofactor. Post-translationally, the disulfide bond which can form in the large chain dimeric partners within the hexadecamer appears to be associated with oxidative stress and protein turnover.

The protein resides in the plastid. Its subcellular location is the chloroplast. It catalyses the reaction 2 (2R)-3-phosphoglycerate + 2 H(+) = D-ribulose 1,5-bisphosphate + CO2 + H2O. The enzyme catalyses D-ribulose 1,5-bisphosphate + O2 = 2-phosphoglycolate + (2R)-3-phosphoglycerate + 2 H(+). Its function is as follows. RuBisCO catalyzes two reactions: the carboxylation of D-ribulose 1,5-bisphosphate, the primary event in carbon dioxide fixation, as well as the oxidative fragmentation of the pentose substrate in the photorespiration process. Both reactions occur simultaneously and in competition at the same active site. The chain is Ribulose bisphosphate carboxylase large chain from Dianthus caryophyllus (Carnation).